The chain runs to 159 residues: Large ribosomal subunit protein uL15 (159 aa).

The segment covering 1–13 has biased composition (basic and acidic residues); the sequence is MRLNELRDNDGAT. A disordered region spans residues 1–41; it reads MRLNELRDNDGATKIRTRVGRGIGSGKGKTGGRGVKGQKSR. Over residues 21 to 35 the composition is skewed to gly residues; sequence RGIGSGKGKTGGRGV.

Belongs to the universal ribosomal protein uL15 family. As to quaternary structure, part of the 50S ribosomal subunit.

Its function is as follows. Binds to the 23S rRNA. The chain is Large ribosomal subunit protein uL15 from Maricaulis maris (strain MCS10) (Caulobacter maris).